Consider the following 173-residue polypeptide: MTIILGIDPGSRVTGYGLIRQQGRQLTYVASGCIRTVVDDMPTRLKLIYAGVSEIITQFKPDFFAIEQVFMAKNPDSALKLGQARGVAIVAAVNQDLEVFEYAARQVKQTVVGTGAAEKAQVQHMVRSLLKLSANPQADAADALAIAITHCHLSQNVLRMSEGRLNLARGRLK.

Residues aspartate 8, glutamate 67, and aspartate 139 contribute to the active site. Residues aspartate 8, glutamate 67, and aspartate 139 each coordinate Mg(2+).

This sequence belongs to the RuvC family. As to quaternary structure, homodimer which binds Holliday junction (HJ) DNA. The HJ becomes 2-fold symmetrical on binding to RuvC with unstacked arms; it has a different conformation from HJ DNA in complex with RuvA. In the full resolvosome a probable DNA-RuvA(4)-RuvB(12)-RuvC(2) complex forms which resolves the HJ. It depends on Mg(2+) as a cofactor.

It localises to the cytoplasm. The enzyme catalyses Endonucleolytic cleavage at a junction such as a reciprocal single-stranded crossover between two homologous DNA duplexes (Holliday junction).. The RuvA-RuvB-RuvC complex processes Holliday junction (HJ) DNA during genetic recombination and DNA repair. Endonuclease that resolves HJ intermediates. Cleaves cruciform DNA by making single-stranded nicks across the HJ at symmetrical positions within the homologous arms, yielding a 5'-phosphate and a 3'-hydroxyl group; requires a central core of homology in the junction. The consensus cleavage sequence is 5'-(A/T)TT(C/G)-3'. Cleavage occurs on the 3'-side of the TT dinucleotide at the point of strand exchange. HJ branch migration catalyzed by RuvA-RuvB allows RuvC to scan DNA until it finds its consensus sequence, where it cleaves and resolves the cruciform DNA. In Serratia proteamaculans (strain 568), this protein is Crossover junction endodeoxyribonuclease RuvC.